A 351-amino-acid chain; its full sequence is Protein-glutamate methylesterase/protein-glutamine glutaminase 1 (351 aa).

One can recognise a Response regulatory domain in the interval 1 to 115 (MVDDSAVVRQ…KQFLTESADE (115 aa)). 4-aspartylphosphate is present on Asp49. A CheB-type methylesterase domain is found at 161-351 (AQTTERIVAI…MAREIVTQLQ (191 aa)). Residues Ser173, His199, and Asp295 contribute to the active site.

The protein belongs to the CheB family. Phosphorylated by CheA. Phosphorylation of the N-terminal regulatory domain activates the methylesterase activity.

It localises to the cytoplasm. The catalysed reaction is [protein]-L-glutamate 5-O-methyl ester + H2O = L-glutamyl-[protein] + methanol + H(+). It catalyses the reaction L-glutaminyl-[protein] + H2O = L-glutamyl-[protein] + NH4(+). Involved in chemotaxis. Part of a chemotaxis signal transduction system that modulates chemotaxis in response to various stimuli. Catalyzes the demethylation of specific methylglutamate residues introduced into the chemoreceptors (methyl-accepting chemotaxis proteins or MCP) by CheR. Also mediates the irreversible deamidation of specific glutamine residues to glutamic acid. The polypeptide is Protein-glutamate methylesterase/protein-glutamine glutaminase 1 (Xanthomonas oryzae pv. oryzae (strain MAFF 311018)).